We begin with the raw amino-acid sequence, 527 residues long: Glutamate--cysteine ligase (527 aa).

This sequence belongs to the glutamate--cysteine ligase type 1 family. Type 1 subfamily.

It catalyses the reaction L-cysteine + L-glutamate + ATP = gamma-L-glutamyl-L-cysteine + ADP + phosphate + H(+). Its pathway is sulfur metabolism; glutathione biosynthesis; glutathione from L-cysteine and L-glutamate: step 1/2. This is Glutamate--cysteine ligase from Bordetella petrii (strain ATCC BAA-461 / DSM 12804 / CCUG 43448).